Here is a 416-residue protein sequence, read N- to C-terminus: MSKADLIIGSQWGDEGKGKIVDMLCANYDYVCRSGGGHNAGHTIWVDGVRYAMHLVPSGILHENIINIIGNGVVVNPDVLIAEMAQFKNLKGRFFISEKAHLNLEHHSLIDQAKERAKGDKAIGTTGKGIGPAYADKVNRTGHRVGELLNPEKLCENLMKEFDENAKFYDALNIKIPEKIAVFNELKRFKEFLAPYIANTTEMLWKALDENKKVLVEGAQGSLLDIDHGTYPYVTSSNTVASGACTGLGLAPKDIGEVIGIVKAYTTRVGNGAFPSEANDEWGEKMCQIGKEFGTTTGRKRRCGWFDAVCVKYSARLSGIDKFALMKLDVLDGFEKVKICTAYKLNGEIIDYFPCNLESVEPVYEEMDGWDSIKGVKKFSDLPENAQKYIKRIEELTNMRAGFISTSPERDDTIIL.

GTP is bound by residues G13–K19 and G41–T43. The active-site Proton acceptor is the D14. Residues D14 and G41 each coordinate Mg(2+). Residues D14 to K17, N39 to H42, T126, R140, Q220, T235, and R299 each bind IMP. H42 functions as the Proton donor in the catalytic mechanism. Residue T295–R301 participates in substrate binding. GTP is bound by residues R301, K327–D329, and S405–S407.

It belongs to the adenylosuccinate synthetase family. As to quaternary structure, homodimer. The cofactor is Mg(2+).

The protein resides in the cytoplasm. The enzyme catalyses IMP + L-aspartate + GTP = N(6)-(1,2-dicarboxyethyl)-AMP + GDP + phosphate + 2 H(+). It participates in purine metabolism; AMP biosynthesis via de novo pathway; AMP from IMP: step 1/2. Its function is as follows. Plays an important role in the de novo pathway of purine nucleotide biosynthesis. Catalyzes the first committed step in the biosynthesis of AMP from IMP. This Campylobacter hominis (strain ATCC BAA-381 / DSM 21671 / CCUG 45161 / LMG 19568 / NCTC 13146 / CH001A) protein is Adenylosuccinate synthetase.